The primary structure comprises 232 residues: 2,3-bisphosphoglycerate-dependent phosphoglycerate mutase (232 aa).

Residues 8-15, 21-22, Arg60, 87-90, Lys98, 114-115, and 183-184 contribute to the substrate site; these read RHGESLWN, TG, ERHY, RR, and GN. The active-site Tele-phosphohistidine intermediate is His9. Glu87 serves as the catalytic Proton donor/acceptor.

This sequence belongs to the phosphoglycerate mutase family. BPG-dependent PGAM subfamily.

It catalyses the reaction (2R)-2-phosphoglycerate = (2R)-3-phosphoglycerate. It functions in the pathway carbohydrate degradation; glycolysis; pyruvate from D-glyceraldehyde 3-phosphate: step 3/5. Catalyzes the interconversion of 2-phosphoglycerate and 3-phosphoglycerate. In Clostridium beijerinckii (strain ATCC 51743 / NCIMB 8052) (Clostridium acetobutylicum), this protein is 2,3-bisphosphoglycerate-dependent phosphoglycerate mutase.